Here is a 203-residue protein sequence, read N- to C-terminus: Protein shisa-like-1a (203 aa).

Residues 1–25 (MIMNGRWSFNTLAIIFILLSTAALS) form the signal peptide. Topologically, residues 26 to 97 (AHFRVCEPYS…SDSFAHNNYT (72 aa)) are extracellular. N53, N63, N72, N83, and N95 each carry an N-linked (GlcNAc...) asparagine glycan. Residues 98-118 (ALIGVWIYGFFVMVLLALDFL) traverse the membrane as a helical segment. Topologically, residues 119–203 (YYSAMNYELC…LLSFQTSTAW (85 aa)) are cytoplasmic. Residues 157–191 (ELNTGPGLSQQQQLHLHHHHHHHHPRHSLRGDTQS) form a disordered region. The span at 161 to 170 (GPGLSQQQQL) shows a compositional bias: low complexity. The span at 171 to 184 (HLHHHHHHHHPRHS) shows a compositional bias: basic residues.

This sequence belongs to the shisa family.

Its subcellular location is the membrane. The protein is Protein shisa-like-1a (shisal1a) of Danio rerio (Zebrafish).